A 546-amino-acid polypeptide reads, in one-letter code: CTP synthase (546 aa).

The interval Met-1–Leu-266 is amidoligase domain. Ser-14 provides a ligand contact to CTP. UTP is bound at residue Ser-14. Residues Ser-15 to Ile-20 and Asp-72 each bind ATP. Positions 72 and 140 each coordinate Mg(2+). CTP contacts are provided by residues Asp-147 to Glu-149, Lys-187 to Gln-192, and Lys-223. UTP contacts are provided by residues Lys-187–Gln-192 and Lys-223. Position 239–241 (Lys-239–Val-241) interacts with ATP. The region spanning Val-291–Arg-542 is the Glutamine amidotransferase type-1 domain. Gly-352 provides a ligand contact to L-glutamine. The active-site Nucleophile; for glutamine hydrolysis is Cys-379. L-glutamine-binding positions include Leu-380–Gln-383, Glu-403, and Arg-470. Residues His-515 and Glu-517 contribute to the active site.

This sequence belongs to the CTP synthase family. Homotetramer.

It catalyses the reaction UTP + L-glutamine + ATP + H2O = CTP + L-glutamate + ADP + phosphate + 2 H(+). The catalysed reaction is L-glutamine + H2O = L-glutamate + NH4(+). It carries out the reaction UTP + NH4(+) + ATP = CTP + ADP + phosphate + 2 H(+). Its pathway is pyrimidine metabolism; CTP biosynthesis via de novo pathway; CTP from UDP: step 2/2. With respect to regulation, allosterically activated by GTP, when glutamine is the substrate; GTP has no effect on the reaction when ammonia is the substrate. The allosteric effector GTP functions by stabilizing the protein conformation that binds the tetrahedral intermediate(s) formed during glutamine hydrolysis. Inhibited by the product CTP, via allosteric rather than competitive inhibition. Catalyzes the ATP-dependent amination of UTP to CTP with either L-glutamine or ammonia as the source of nitrogen. Regulates intracellular CTP levels through interactions with the four ribonucleotide triphosphates. This Shewanella sp. (strain ANA-3) protein is CTP synthase.